The primary structure comprises 651 residues: UvrABC system protein C (651 aa).

A GIY-YIG domain is found at 20–97; sequence ERCGVYRMFD…IKKFQPKFNI (78 aa). The UVR domain occupies 207–242; that stretch reads KALQENLSKKMEELSSQMRFEEAAEIRDRIKALSYV.

The protein belongs to the UvrC family. Interacts with UvrB in an incision complex.

Its subcellular location is the cytoplasm. Functionally, the UvrABC repair system catalyzes the recognition and processing of DNA lesions. UvrC both incises the 5' and 3' sides of the lesion. The N-terminal half is responsible for the 3' incision and the C-terminal half is responsible for the 5' incision. This is UvrABC system protein C from Rickettsia akari (strain Hartford).